The sequence spans 249 residues: MQLLCYFVILFVGIAPWSSLANDDGCNEVVCGSVVSKCLITQSCQCKLNDCHCCKDCLNCLGELYIECCGCLDMCPKHKDVLPSLTPRSEIGDIEGVPELFDTLTAEDDEGWSTIRFSMRAGFKQRVQGGASGDAGNGNGNGNAGSAGVTLCTVIYVNSCIRANKCRQQCESMGASSYRWFHDGCCECVGENCLNYGINESRCRGCPEDQDQLLTADTVPAEAEQDLERFFGNEEIEDEWGYGEEDEFS.

Residues 1–23 form the signal peptide; that stretch reads MQLLCYFVILFVGIAPWSSLAND. An N-linked (GlcNAc...) asparagine glycan is attached at Asn-199.

Belongs to the twisted gastrulation protein family. In terms of assembly, component of a complex composed of dpp, sog and tsg. In terms of tissue distribution, first appears in stage 4 embryos, expressed in two domains: a broad mid-dorsal saddle and an anterior cap, expression between the domains is continuous across the dorsal midline. At stage 5, expression is refined into 4 graded stripes in the mid-dorsal region and a paired domain in the anterior region. During stages 7 and 8, anterior expression fades and the mid dorsal stripes are located between the anterior and posterior transverse furrow (ATF and PTF). Expressing cells become incorporated into the deepening PTF.

It localises to the secreted. Its function is as follows. Involved in dorsal-ventral patterning. Required for specification of a narrow strip of dorsal midline cells that will give rise to the amnioserosa, but not for specification of dorsal ectoderm cells. Inhibits BMP signaling; enhances the binding of sog to dpp, thus enhancing the antagonistic activity of sog. The protein is Protein twisted gastrulation (tsg) of Drosophila melanogaster (Fruit fly).